A 61-amino-acid chain; its full sequence is Large ribosomal subunit protein bL32 (61 aa).

The protein belongs to the bacterial ribosomal protein bL32 family.

The sequence is that of Large ribosomal subunit protein bL32 from Ehrlichia canis (strain Jake).